A 429-amino-acid polypeptide reads, in one-letter code: MSQIVDIRAREILDSRGNPTIEADVILESGVVGRACAPSGASTGSREALELRDGDKSRYLGKGVRTAVQNVNSSIHELLVGQSVFEQKALDEKMIAFDGTENKSKLGANATLAVSLAAAHAAAAEQKLPLFQYIANLRGQTTLTMPVPMMNILNGGAHADNTVDIQEFMIEPVGFTSFAEALRAGAEVFHSLKSVLKKQGLNTAVGDEGGFAPNLRSNEEAITVILQAIEQTGYKAGSDIMLALDCASSEFYKNGQYILEGEGNKSFTSNQFADYLAGLVKQYPIISIEDGLDESDWEGWSYLTSILGDKIQLVGDDLFVTNPKILQRGIDEKVGNSILIKYNQIGTLTETLDAIYLAKANGYTTVISHRSGETEDSTIADLAVGTAAGQIKTGSLCRSDRVSKYNQLLRIEELTKAVYRGKAEFKGLN.

Q166 contacts (2R)-2-phosphoglycerate. E208 functions as the Proton donor in the catalytic mechanism. Residues D245, E289, and D316 each contribute to the Mg(2+) site. Residues K341, R370, S371, and K392 each coordinate (2R)-2-phosphoglycerate. The Proton acceptor role is filled by K341.

This sequence belongs to the enolase family. As to quaternary structure, component of the RNA degradosome, a multiprotein complex involved in RNA processing and mRNA degradation. Mg(2+) serves as cofactor.

It localises to the cytoplasm. It is found in the secreted. The protein resides in the cell surface. It carries out the reaction (2R)-2-phosphoglycerate = phosphoenolpyruvate + H2O. It participates in carbohydrate degradation; glycolysis; pyruvate from D-glyceraldehyde 3-phosphate: step 4/5. Catalyzes the reversible conversion of 2-phosphoglycerate (2-PG) into phosphoenolpyruvate (PEP). It is essential for the degradation of carbohydrates via glycolysis. This is Enolase from Acinetobacter baumannii (strain AB307-0294).